Reading from the N-terminus, the 605-residue chain is Formin-binding protein 1-like (605 aa).

The F-BAR domain maps to 1–263 (MSWGTELWDQ…AAKSVDERRD (263 aa)). Residues 66 to 258 (FTSCVAFFNI…EGMILAAKSV (193 aa)) are a coiled coil. An interaction with CDC42 region spans residues 245-535 (SKCLEGMILA…EFDDEFEDDD (291 aa)). Position 295 is a phosphoserine (S295). Residues 392 to 484 (LEDFSHLPPE…VEGKTGGRGD (93 aa)) adopt a coiled-coil conformation. An REM-1 domain is found at 397–474 (HLPPEQRRKK…IHKNEAWLSE (78 aa)). The span at 476–490 (EGKTGGRGDRRHSSD) shows a compositional bias: basic and acidic residues. Residues 476–539 (EGKTGGRGDR…EFEDDDPLPA (64 aa)) are disordered. A phosphoserine mark is found at S488, S501, and S505. Residues 522-605 (GHHNEFDDEF…VTLEKNSKGS (84 aa)) form an interaction with DNM1 region. Positions 527 to 536 (FDDEFEDDDP) are enriched in acidic residues. The 62-residue stretch at 538 to 599 (PAIGHCKAIY…PTSYIDVTLE (62 aa)) folds into the SH3 domain. Positions 541–597 (GHCKAIYPFDGHNEGTLAMKEGEVLYIIEEDKGDGWTRARRQNGEEGYVPTSYIDVT) are interaction with DNM2 and WASL. An interaction with DAAM1, DIAPH1 and DIAPH2 region spans residues 541–605 (GHCKAIYPFD…VTLEKNSKGS (65 aa)).

Belongs to the FNBP1 family. As to quaternary structure, homodimerizes, the dimers can polymerize end-to-end to form filamentous structures. Interacts with GTP-bound CDC42. Interacts with DAAM1, DIAPH1, DIAPH2, DNM1, DNM2 and WASL/N-WASP. Interacts with ATG3. Interacts (via SH3 domain) with ABI1, WASF2, CDC42 and WIPF1.

It localises to the cytoplasm. Its subcellular location is the cytoskeleton. It is found in the cell cortex. The protein resides in the cytoplasmic vesicle. The protein localises to the cell membrane. Required to coordinate membrane tubulation with reorganization of the actin cytoskeleton during endocytosis. May bind to lipids such as phosphatidylinositol 4,5-bisphosphate and phosphatidylserine and promote membrane invagination and the formation of tubules. Also promotes CDC42-induced actin polymerization by activating the WASL/N-WASP-WASPIP/WIP complex, the predominant form of WASL/N-WASP in cells. Actin polymerization may promote the fission of membrane tubules to form endocytic vesicles. Essential for autophagy of intracellular bacterial pathogens. The sequence is that of Formin-binding protein 1-like (FNBP1L) from Homo sapiens (Human).